A 434-amino-acid chain; its full sequence is Serine hydroxymethyltransferase 1 (434 aa).

(6S)-5,6,7,8-tetrahydrofolate is bound by residues leucine 136 and 140–142 (GHL). Lysine 245 carries the N6-(pyridoxal phosphate)lysine modification.

This sequence belongs to the SHMT family. Homodimer. Pyridoxal 5'-phosphate is required as a cofactor.

Its subcellular location is the cytoplasm. It catalyses the reaction (6R)-5,10-methylene-5,6,7,8-tetrahydrofolate + glycine + H2O = (6S)-5,6,7,8-tetrahydrofolate + L-serine. It participates in one-carbon metabolism; tetrahydrofolate interconversion. It functions in the pathway amino-acid biosynthesis; glycine biosynthesis; glycine from L-serine: step 1/1. Catalyzes the reversible interconversion of serine and glycine with tetrahydrofolate (THF) serving as the one-carbon carrier. This reaction serves as the major source of one-carbon groups required for the biosynthesis of purines, thymidylate, methionine, and other important biomolecules. Also exhibits THF-independent aldolase activity toward beta-hydroxyamino acids, producing glycine and aldehydes, via a retro-aldol mechanism. The sequence is that of Serine hydroxymethyltransferase 1 from Rhodospirillum rubrum (strain ATCC 11170 / ATH 1.1.1 / DSM 467 / LMG 4362 / NCIMB 8255 / S1).